A 198-amino-acid chain; its full sequence is 7-methyl-GTP pyrophosphatase (198 aa).

Residue Asp69 is the Proton acceptor of the active site.

This sequence belongs to the Maf family. YceF subfamily. It depends on a divalent metal cation as a cofactor.

The protein localises to the cytoplasm. The enzyme catalyses N(7)-methyl-GTP + H2O = N(7)-methyl-GMP + diphosphate + H(+). Functionally, nucleoside triphosphate pyrophosphatase that hydrolyzes 7-methyl-GTP (m(7)GTP). May have a dual role in cell division arrest and in preventing the incorporation of modified nucleotides into cellular nucleic acids. The protein is 7-methyl-GTP pyrophosphatase of Yersinia pseudotuberculosis serotype I (strain IP32953).